Consider the following 579-residue polypeptide: YTH domain-containing family protein 2 (579 aa).

The disordered stretch occupies residues 1 to 45 (MSASSLLEQRPKGQGNKVQNGSVHQKDGLNDDDFEPYLSPQARPN). The residue at position 2 (serine 2) is an N-acetylserine. Serine 2, serine 4, serine 5, serine 22, serine 39, and serine 196 each carry phosphoserine. The segment at 2–384 (SASSLLEQRP…QAGSGSTPSE (383 aa)) is localization to mRNA processing bodies (P-bodies). Positions 247–387 (AKQQPKLKTK…SGSTPSEPHP (141 aa)) are disordered. Over residues 291 to 316 (ALVQNIGQPTQGSPQHVGQQANNSPP) the composition is skewed to polar residues. Residues 337–349 (AQLSVQQQAAQPT) show a composition bias toward low complexity. Position 359 is a phosphoserine (serine 359). Residues 359–371 (SGFGHNGVDGNGV) are compositionally biased toward gly residues. The span at 372–383 (GQSQAGSGSTPS) shows a compositional bias: polar residues. Residues 385-579 (PHPVLEKLRS…VKKERQGRGK (195 aa)) are interaction with m6A-containing mRNAs. Serine 394 bears the Phosphoserine mark. Residues 410–544 (GRVFIIKSYS…EKAKQVLKII (135 aa)) enclose the YTH domain. Residues 416-418 (KSY), aspartate 422, 432-433 (WC), asparagine 462, tryptophan 486, and tryptophan 491 each bind RNA.

Belongs to the YTHDF family. YTHDF2 subfamily. As to quaternary structure, interacts with CNOT1; interaction is direct and promotes recruitment of the CCR4-NOT complex. Interacts with YTHDF3. Interacts with RIDA/HRSP12; interaction leads to recruitment of the ribonuclease P/MRP complex. Post-translationally, ubiquitinated by the SCF(SKP2) complex, leading to its degradation.

It localises to the cytoplasm. It is found in the cytosol. The protein localises to the P-body. Its subcellular location is the stress granule. The protein resides in the nucleus. In terms of biological role, specifically recognizes and binds N6-methyladenosine (m6A)-containing RNAs, and regulates their stability. M6A is a modification present at internal sites of mRNAs and some non-coding RNAs and plays a role in mRNA stability and processing. Acts as a regulator of mRNA stability by promoting degradation of m6A-containing mRNAs via interaction with the CCR4-NOT and ribonuclease P/MRP complexes, depending on the context. The YTHDF paralogs (YTHDF1, YTHDF2 and YTHDF3) share m6A-containing mRNAs targets and act redundantly to mediate mRNA degradation and cellular differentiation. M6A-containing mRNAs containing a binding site for RIDA/HRSP12 (5'-GGUUC-3') are preferentially degraded by endoribonucleolytic cleavage: cooperative binding of RIDA/HRSP12 and YTHDF2 to transcripts leads to recruitment of the ribonuclease P/MRP complex. Other m6A-containing mRNAs undergo deadenylation via direct interaction between YTHDF2 and CNOT1, leading to recruitment of the CCR4-NOT and subsequent deadenylation of m6A-containing mRNAs. Required maternally to regulate oocyte maturation: probably acts by binding to m6A-containing mRNAs, thereby regulating maternal transcript dosage during oocyte maturation, which is essential for the competence of oocytes to sustain early zygotic development. Also required during spermatogenesis: regulates spermagonial adhesion by promoting degradation of m6A-containing transcripts coding for matrix metallopeptidases. Also involved in hematopoietic stem cells specification by binding to m6A-containing mRNAs, leading to promote their degradation. Also acts as a regulator of neural development by promoting m6A-dependent degradation of neural development-related mRNA targets. Inhibits neural specification of induced pluripotent stem cells by binding to methylated neural-specific mRNAs and promoting their degradation, thereby restraining neural differentiation. Regulates circadian regulation of hepatic lipid metabolism: acts by promoting m6A-dependent degradation of PPARA transcripts. Regulates the innate immune response to infection by inhibiting the type I interferon response: acts by binding to m6A-containing IFNB transcripts and promoting their degradation. May also act as a promoter of cap-independent mRNA translation following heat shock stress: upon stress, relocalizes to the nucleus and specifically binds mRNAs with some m6A methylation mark at their 5'-UTR, protecting demethylation of mRNAs by FTO, thereby promoting cap-independent mRNA translation. Regulates mitotic entry by promoting the phase-specific m6A-dependent degradation of WEE1 transcripts. Promotes formation of phase-separated membraneless compartments, such as P-bodies or stress granules, by undergoing liquid-liquid phase separation upon binding to mRNAs containing multiple m6A-modified residues: polymethylated mRNAs act as a multivalent scaffold for the binding of YTHDF proteins, juxtaposing their disordered regions and thereby leading to phase separation. The resulting mRNA-YTHDF complexes then partition into different endogenous phase-separated membraneless compartments, such as P-bodies, stress granules or neuronal RNA granules. May also recognize and bind RNAs modified by C5-methylcytosine (m5C) and act as a regulator of rRNA processing. This is YTH domain-containing family protein 2 from Macaca fascicularis (Crab-eating macaque).